The primary structure comprises 443 residues: ATP-dependent protease ATPase subunit HslU (443 aa).

ATP-binding positions include I18, 60–65 (GVGKTE), D256, E321, and R393.

This sequence belongs to the ClpX chaperone family. HslU subfamily. As to quaternary structure, a double ring-shaped homohexamer of HslV is capped on each side by a ring-shaped HslU homohexamer. The assembly of the HslU/HslV complex is dependent on binding of ATP.

The protein localises to the cytoplasm. ATPase subunit of a proteasome-like degradation complex; this subunit has chaperone activity. The binding of ATP and its subsequent hydrolysis by HslU are essential for unfolding of protein substrates subsequently hydrolyzed by HslV. HslU recognizes the N-terminal part of its protein substrates and unfolds these before they are guided to HslV for hydrolysis. This chain is ATP-dependent protease ATPase subunit HslU, found in Yersinia pestis bv. Antiqua (strain Antiqua).